Here is a 280-residue protein sequence, read N- to C-terminus: MLSKAHAKINLSLDVIGKRKDGYHLLKMLMQTIDLYDLIEIKKIKKDIIIDCDREYIPKDRRNLAYKAASLFLDRYNIDSGVRINITKNIPVAAGLAGGSTDAATVLKIMRDIFEPDISNEELKEIALDIGADVPFCIEGGTALCEGIGEKITSIKNFKNQILVLVKPNFGLSTKDVYNNLKVEKIYIHPNTTKLIQSIEEDNLESVARNMRNVLENVTLRKYKTLNSIKSNFIELGALGSMMSGSGPSVFGLFDDMLKAQICYDNMKEKYKEVFITRTI.

Lysine 8 is an active-site residue. 91–101 (PVAAGLAGGST) lines the ATP pocket. Aspartate 133 is a catalytic residue.

It belongs to the GHMP kinase family. IspE subfamily.

It carries out the reaction 4-CDP-2-C-methyl-D-erythritol + ATP = 4-CDP-2-C-methyl-D-erythritol 2-phosphate + ADP + H(+). Its pathway is isoprenoid biosynthesis; isopentenyl diphosphate biosynthesis via DXP pathway; isopentenyl diphosphate from 1-deoxy-D-xylulose 5-phosphate: step 3/6. Catalyzes the phosphorylation of the position 2 hydroxy group of 4-diphosphocytidyl-2C-methyl-D-erythritol. The chain is 4-diphosphocytidyl-2-C-methyl-D-erythritol kinase from Clostridium botulinum (strain Okra / Type B1).